The primary structure comprises 4910 residues: Midasin (4910 aa).

AAA-ATPase protomer regions lie at residues 305–528 and 636–975; these read IQNS…DILF and MEQI…TDII. Residues 315–322 and 653–660 contribute to the ATP site; these read GKAGSGKT and GETGTGKT. The segment at 695-803 is interaction with RIX1; that stretch reads VNSKTVAVPI…KKFEAQSSSI (109 aa). T1026 is modified (phosphothreonine). 4 AAA-ATPase protomer regions span residues 1054–1280, 1345–1624, 1732–1985, and 2036–2286; these read HYII…WALR, KGMR…VEFI, RVVR…QLLI, and VYES…DELH. ATP is bound by residues 1083 to 1090, 1368 to 1375, 1747 to 1754, and 2054 to 2061; these read GPTSSGKT, GETGCGKT, GSPGVGKT, and GPSNSGKT. Residues 2372–4075 are linker; that stretch reads EVGKWANNVL…DGEGAQNNNK (1704 aa). A Phosphoserine modification is found at S2971. Disordered regions lie at residues 4045 to 4547, 4555 to 4574, and 4579 to 4600; these read SPQP…EKMD, SDIDAHDANNDVDSKKSGFI, and SEEDFENELSNEHFSADQEDDS. Acidic residues predominate over residues 4078–4088; the sequence is EQDEDLTEDAQ. The span at 4089-4098 shows a compositional bias: basic and acidic residues; sequence NENKEQQDKD. Over residues 4099–4154 the composition is skewed to acidic residues; it reads ERDDENEDDAVEMEGDMAGELEDLSNGEENDDEDTDSEEEELDEEIDDLNEDDPNA. Residues 4155-4174 are compositionally biased toward basic and acidic residues; that stretch reads IDDKMWDDKASDNSKEKDTD. 3 stretches are compositionally biased toward acidic residues: residues 4202-4244, 4251-4274, and 4288-4358; these read GDED…EDLE, ETLDLPEDMNLDSEHEESDEDVDM, and GNED…EEEL. At S4353 the chain carries Phosphoserine. Positions 4359–4372 are enriched in basic and acidic residues; that stretch reads KQDAAMEENKEKGG. A Phosphothreonine modification is found at T4388. 2 stretches are compositionally biased toward basic and acidic residues: residues 4435 to 4447 and 4481 to 4495; these read DVTKNNEESREEA and LEKNNERPDEFEHVE. Over residues 4498-4516 the composition is skewed to polar residues; that stretch reads NTETDTQALGSATQDQLQT. The span at 4517–4531 shows a compositional bias: acidic residues; sequence IDEDMAIDDDREEQE. At S4555 the chain carries Phosphoserine. Residues 4557-4570 show a composition bias toward basic and acidic residues; it reads IDAHDANNDVDSKK. One can recognise a VWFA domain in the interval 4704 to 4899; it reads QIMIALDDSK…SELPEMLSLI (196 aa).

It belongs to the midasin family. In terms of assembly, associates with pre-60S ribosomes in the nucleoplasm. Interacts (via its hexameric AAA ATPase ring) with the RIX1 complex (via RIX1); this interaction is crucial for recruitment of MDN1 to the pre-ribosomal particle. Interacts (via VWFA/MIDAS domain) with YTM1 (via UBL domain). Interacts (via VWFA/MIDAS domain) with RSA4 (via UBL domain).

It is found in the nucleus. It localises to the nucleolus. The protein resides in the nucleoplasm. Functionally, nuclear chaperone required for maturation and nuclear export of pre-60S ribosome subunits. Functions at successive maturation steps to remove ribosomal factors at critical transition points, first driving the exit of early pre-60S particles from the nucleolus and then driving late pre-60S particles from the nucleus. At an early stage in 60S maturation, mediates the dissociation of the NOP7 complex (YTM1-ERB1-NOP7) from early pre-60S particles, rendering them competent for export from the nucleolus to the nucleoplasm. Subsequently recruited to the nucleoplasmic particles through interaction with the RIX1 complex. This binding is only possible if the 5S RNP at the central protuberance has undergone the rotation to complete its maturation. After remodeling, removes the ribosome biogenesis factor RSA4 in an ATP hydrolysis-driven step from pre-60S ribosomal subunits, rendering them competent for export from the nucleoplasm to the cytoplasm. Activates the GTPase activity of NOG2, which disengages from the pre-60S particle upon GTP hydrolysis, thus freeing its binding site for the nuclear export factor NMD3. The sequence is that of Midasin (MDN1) from Saccharomyces cerevisiae (strain ATCC 204508 / S288c) (Baker's yeast).